Reading from the N-terminus, the 860-residue chain is DDB1- and CUL4-associated factor 6 (860 aa).

5 WD repeats span residues 49–88, 92–133, 139–179, 189–229, and 251–290; these read VHDGCVNTICWNDTGEYILSGSDDTKLVISNPYSRKVLTT, GHRA…ETNR, CHYG…SCTK, NCRR…TRAT, and NKSCRVTSLCYSEDGQEILVSYSSDYIYLFDPKDDTAREL. Composition is skewed to basic and acidic residues over residues 288–303 and 312–334; these read RELKTPSAEERREELR and LRGDWSDTGPRARPESERERDGE. Disordered stretches follow at residues 288–340, 355–392, 407–490, and 502–675; these read RELK…PNVS, EASEVAQSNRGRGRSRPRGGTSQSDISTLPTVPSSPDL, QFLQ…TTST, and IASS…GPGD. At Ser336 the chain carries Phosphoserine. Polar residues-rich tracts occupy residues 379–388 and 409–421; these read DISTLPTVPS and LQPSTSSTMSAQA. The segment covering 422–441 has biased composition (low complexity); that stretch reads HSTSSPTESPHSTPLLSSPD. Residues 457-467 show a composition bias toward basic and acidic residues; sequence HQSDNNNEKLS. Positions 480–490 are enriched in polar residues; that stretch reads HYSTEGTTTST. Over residues 502-511 the composition is skewed to low complexity; the sequence is IASSSRGIGS. The span at 535–549 shows a compositional bias: basic and acidic residues; it reads SETKAPEESSEDVTK. The span at 614-626 shows a compositional bias: low complexity; it reads TSTESATNENNTN. The span at 627–636 shows a compositional bias: polar residues; the sequence is PEPQFQTEAT. Ser649 carries the phosphoserine modification. Thr654 is modified (phosphothreonine). Position 657 is a phosphoserine (Ser657). An IQ domain is found at 676–705; it reads RRSAVARIQEFFRRRKERKEMEELDTLNIR. WD repeat units lie at residues 718–756 and 759–798; these read NSRTMIKEANFWGANFVMSGSDCGHIFIWDRHTAEHLML and ADNHVVNCLQPHPFDPILASSGIDYDIKIWSPLEESRIFN. Phosphoserine is present on residues Ser847 and Ser850.

In terms of assembly, interacts with the nuclear receptors NR3C1 and AR in the presence of ligand. Interacts with DDB1, CUL4A and CUL4B. In terms of tissue distribution, highly expressed in skeletal muscle and testis. Expressed to a lesser degree in heart, prostate, and adrenal gland.

It is found in the nucleus. It participates in protein modification; protein ubiquitination. Functionally, ligand-dependent coactivator of nuclear receptors. Enhance transcriptional activity of the nuclear receptors NR3C1 and AR. May function as a substrate receptor for CUL4-DDB1 E3 ubiquitin-protein ligase complex. The sequence is that of DDB1- and CUL4-associated factor 6 (DCAF6) from Homo sapiens (Human).